Consider the following 302-residue polypeptide: UDP-N-acetylenolpyruvoylglucosamine reductase (302 aa).

Positions 32-195 (LGGPADLLAR…VTVTLELVPD (164 aa)) constitute an FAD-binding PCMH-type domain. R175 is an active-site residue. S224 acts as the Proton donor in catalysis. E294 is a catalytic residue.

This sequence belongs to the MurB family. FAD is required as a cofactor.

It is found in the cytoplasm. It catalyses the reaction UDP-N-acetyl-alpha-D-muramate + NADP(+) = UDP-N-acetyl-3-O-(1-carboxyvinyl)-alpha-D-glucosamine + NADPH + H(+). It participates in cell wall biogenesis; peptidoglycan biosynthesis. Its function is as follows. Cell wall formation. The sequence is that of UDP-N-acetylenolpyruvoylglucosamine reductase from Moorella thermoacetica (strain ATCC 39073 / JCM 9320).